A 774-amino-acid chain; its full sequence is Beta-xylosidase/alpha-L-arabinofuranosidase 1 (774 aa).

A signal peptide spans 1-33 (ANTKNREPKVSSVFLCFSIFYVTVLLNCNHVYG). N-linked (GlcNAc...) asparagine glycans are attached at residues Asn48 and Asn136. Residue Asp303 is part of the active site. Residues Asn437 and Asn530 are each glycosylated (N-linked (GlcNAc...) asparagine).

This sequence belongs to the glycoside hydrolase 3 family. In terms of processing, proteolytically cleaved in roots to form a 65 kDa protein.

The protein resides in the secreted. It localises to the extracellular space. The protein localises to the extracellular matrix. The enzyme catalyses Hydrolysis of (1-&gt;4)-beta-D-xylans, to remove successive D-xylose residues from the non-reducing termini.. It catalyses the reaction Hydrolysis of terminal non-reducing alpha-L-arabinofuranoside residues in alpha-L-arabinosides.. A bifunctional beta-xylosidase/alpha-L-arabinosidase, exo-enzyme that acts synergistically with endohydrolases. Releases xylose and arabinose from cell walls. Does not cleave xylan from oat spelts although xylan from oat spelts was degraded to xylose when this enzyme was used in combination with xylanase. Also releases xylose and arabinose from aryl glycosides, xylo-oligosaccharides, arabinan from sugar beet and arabino-oligosaccharides, arabinan from sugar beet and arabinoxylan from wheat. This chain is Beta-xylosidase/alpha-L-arabinofuranosidase 1, found in Medicago sativa subsp. varia (Alfalfa).